A 409-amino-acid chain; its full sequence is 1-deoxy-D-xylulose 5-phosphate reductoisomerase (409 aa).

Positions 10, 11, 12, 13, 36, 37, 38, and 126 each coordinate NADPH. Lys-127 is a 1-deoxy-D-xylulose 5-phosphate binding site. Glu-128 contributes to the NADPH binding site. Residue Asp-152 participates in Mn(2+) binding. 1-deoxy-D-xylulose 5-phosphate contacts are provided by Ser-153, Glu-154, Ser-190, and His-213. Position 154 (Glu-154) interacts with Mn(2+). Gly-219 lines the NADPH pocket. Positions 226, 231, 232, and 235 each coordinate 1-deoxy-D-xylulose 5-phosphate. Glu-235 lines the Mn(2+) pocket.

It belongs to the DXR family. Mg(2+) serves as cofactor. Mn(2+) is required as a cofactor.

It carries out the reaction 2-C-methyl-D-erythritol 4-phosphate + NADP(+) = 1-deoxy-D-xylulose 5-phosphate + NADPH + H(+). Its pathway is isoprenoid biosynthesis; isopentenyl diphosphate biosynthesis via DXP pathway; isopentenyl diphosphate from 1-deoxy-D-xylulose 5-phosphate: step 1/6. Its function is as follows. Catalyzes the NADPH-dependent rearrangement and reduction of 1-deoxy-D-xylulose-5-phosphate (DXP) to 2-C-methyl-D-erythritol 4-phosphate (MEP). This Prochlorococcus marinus (strain MIT 9515) protein is 1-deoxy-D-xylulose 5-phosphate reductoisomerase.